The sequence spans 55 residues: uncharacterized protein (55 aa).

This is an uncharacterized protein from Mycobacterium tuberculosis (strain ATCC 25618 / H37Rv).